A 343-amino-acid polypeptide reads, in one-letter code: NAC domain-containing protein 4 (343 aa).

The region spanning 12-168 (LPPGFRFHPT…EWVLCRVFKK (157 aa)) is the NAC domain. Residues 109–174 (VGMKKTLVFY…VFKKSLVEVG (66 aa)) mediate DNA binding. The disordered stretch occupies residues 304–333 (GGERERLSASQDTGLTSDVNPEISSSSGQK). Positions 311–332 (SASQDTGLTSDVNPEISSSSGQ) are enriched in polar residues.

In terms of tissue distribution, expressed in roots, tiller buds, stems, leaves, lamina joints and the young husks. Expressed in embryos, coleoptiles, radicles, leaf pulvinus, ligules, panicles, palea and lemma, anthers, and the internode of the peduncles. Expressed in young leaves, root meristems, florescence meristems and young spikelets.

It localises to the nucleus. Its function is as follows. Transcription factor involved in the regulation of tiller bud outgrowth, but does not seem to regulate tiller bud initiation. Possesses transactivation activity in yeast. Involved in the regulation of plant architecture and grain yield. Acts as a negative regulator of plant height and flowering time. Regulates directly key genes of the gibberellin (GA) pathway by binding to their promoters. Positively regulates leaf senescence in an age-dependent manner. Activates directly the expression of the chlorophyll degradation genes SGR and NYC3. Positively regulates the level of abscisic acid (ABA) by directly up-regulating the expression of the ABA biosynthetic genes NCED3 and ZEP, and down-regulating the ABA catabolic gene CYP707A5/ABA8OX1. Promotes salt-induced cell death accompanied by the loss of plasma membrane integrity, nuclear DNA fragmentation, and changes of caspase-like activity. Targets genes that encoded a reactive oxygen species (ROS) scavenger COX11 and a caspase-like protease AP37. Activates the potassium efflux channels GORK and SKOR. Acts as a positive regulator of drought and salt tolerance through ABA-mediated pathways. Acts as a negative regulator of root growth. Functions as an upstream integrator of auxin and cytokinin signals that affect CROWN ROOTLESS (CRL) and cyclin-dependent protein kinase (CDK) genes to regulate cell division during root development. Binds directly to the promoters of the auxin inactivation-related genes GH3.6 and GH3.8, the auxin signaling-related gene ARF25, and the cytokinin oxidase gene CKX4. Activates directly the expressions of the 1-aminocyclopropane-1-carboxylate oxidase genes ACO1 and ACO3, enhancing ethylene synthesis, and then retarding seedling establishment. This is NAC domain-containing protein 4 from Oryza sativa subsp. japonica (Rice).